The chain runs to 233 residues: Large ribosomal subunit protein uL1 (233 aa).

The protein belongs to the universal ribosomal protein uL1 family. As to quaternary structure, part of the 50S ribosomal subunit.

In terms of biological role, binds directly to 23S rRNA. The L1 stalk is quite mobile in the ribosome, and is involved in E site tRNA release. Functionally, protein L1 is also a translational repressor protein, it controls the translation of the L11 operon by binding to its mRNA. The protein is Large ribosomal subunit protein uL1 of Shewanella woodyi (strain ATCC 51908 / MS32).